The following is a 271-amino-acid chain: NADH-quinone oxidoreductase subunit B (271 aa).

The [4Fe-4S] cluster site is built by cysteine 37, cysteine 38, cysteine 103, and cysteine 132. A disordered region spans residues leucine 227–isoleucine 271. Positions isoleucine 239–alanine 251 are enriched in basic and acidic residues.

Belongs to the complex I 20 kDa subunit family. In terms of assembly, NDH-1 is composed of 14 different subunits. Subunits NuoB, C, D, E, F, and G constitute the peripheral sector of the complex. [4Fe-4S] cluster is required as a cofactor.

The protein localises to the cell membrane. The enzyme catalyses a quinone + NADH + 5 H(+)(in) = a quinol + NAD(+) + 4 H(+)(out). NDH-1 shuttles electrons from NADH, via FMN and iron-sulfur (Fe-S) centers, to quinones in the respiratory chain. The immediate electron acceptor for the enzyme in this species is believed to be a menaquinone. Couples the redox reaction to proton translocation (for every two electrons transferred, four hydrogen ions are translocated across the cytoplasmic membrane), and thus conserves the redox energy in a proton gradient. In Frankia casuarinae (strain DSM 45818 / CECT 9043 / HFP020203 / CcI3), this protein is NADH-quinone oxidoreductase subunit B.